A 210-amino-acid chain; its full sequence is Thiamine-phosphate synthase (210 aa).

Residues 36-40 and asparagine 68 contribute to the 4-amino-2-methyl-5-(diphosphooxymethyl)pyrimidine site; that span reads QLRIK. Mg(2+) is bound by residues aspartate 69 and aspartate 88. Serine 107 provides a ligand contact to 4-amino-2-methyl-5-(diphosphooxymethyl)pyrimidine. 2-[(2R,5Z)-2-carboxy-4-methylthiazol-5(2H)-ylidene]ethyl phosphate is bound at residue 133-135; it reads TQT. Residue lysine 136 coordinates 4-amino-2-methyl-5-(diphosphooxymethyl)pyrimidine. 2-[(2R,5Z)-2-carboxy-4-methylthiazol-5(2H)-ylidene]ethyl phosphate-binding positions include glycine 165 and 185-186; that span reads VS.

This sequence belongs to the thiamine-phosphate synthase family. Mg(2+) serves as cofactor.

It catalyses the reaction 2-[(2R,5Z)-2-carboxy-4-methylthiazol-5(2H)-ylidene]ethyl phosphate + 4-amino-2-methyl-5-(diphosphooxymethyl)pyrimidine + 2 H(+) = thiamine phosphate + CO2 + diphosphate. The catalysed reaction is 2-(2-carboxy-4-methylthiazol-5-yl)ethyl phosphate + 4-amino-2-methyl-5-(diphosphooxymethyl)pyrimidine + 2 H(+) = thiamine phosphate + CO2 + diphosphate. It carries out the reaction 4-methyl-5-(2-phosphooxyethyl)-thiazole + 4-amino-2-methyl-5-(diphosphooxymethyl)pyrimidine + H(+) = thiamine phosphate + diphosphate. Its pathway is cofactor biosynthesis; thiamine diphosphate biosynthesis; thiamine phosphate from 4-amino-2-methyl-5-diphosphomethylpyrimidine and 4-methyl-5-(2-phosphoethyl)-thiazole: step 1/1. Functionally, condenses 4-methyl-5-(beta-hydroxyethyl)thiazole monophosphate (THZ-P) and 2-methyl-4-amino-5-hydroxymethyl pyrimidine pyrophosphate (HMP-PP) to form thiamine monophosphate (TMP). This is Thiamine-phosphate synthase from Cronobacter sakazakii (strain ATCC BAA-894) (Enterobacter sakazakii).